Consider the following 560-residue polypeptide: Phenylalanine--tRNA ligase beta subunit (560 aa).

Positions 279-354 (LTPKEFEVDL…IAYGYNNIEP (76 aa)) constitute a B5 domain. The Mg(2+) site is built by aspartate 332, aspartate 338, glutamate 341, and aspartate 342.

It belongs to the phenylalanyl-tRNA synthetase beta subunit family. Type 2 subfamily. In terms of assembly, tetramer of two alpha and two beta subunits. Mg(2+) is required as a cofactor.

The protein localises to the cytoplasm. It carries out the reaction tRNA(Phe) + L-phenylalanine + ATP = L-phenylalanyl-tRNA(Phe) + AMP + diphosphate + H(+). The protein is Phenylalanine--tRNA ligase beta subunit of Thermococcus sibiricus (strain DSM 12597 / MM 739).